Here is a 273-residue protein sequence, read N- to C-terminus: Undecaprenyl-diphosphatase (273 aa).

A run of 7 helical transmembrane segments spans residues 4–24 (LILL…FLPI), 43–63 (KAKV…CWEY), 82–102 (FVIN…LFIK), 108–128 (LFHP…ILWA), 183–203 (AAEF…FYDV), 217–237 (MFAT…RGFI), and 248–268 (FAWY…SGLV).

The protein belongs to the UppP family.

It localises to the cell inner membrane. It carries out the reaction di-trans,octa-cis-undecaprenyl diphosphate + H2O = di-trans,octa-cis-undecaprenyl phosphate + phosphate + H(+). Its function is as follows. Catalyzes the dephosphorylation of undecaprenyl diphosphate (UPP). Confers resistance to bacitracin. In Nitrosomonas europaea (strain ATCC 19718 / CIP 103999 / KCTC 2705 / NBRC 14298), this protein is Undecaprenyl-diphosphatase.